The chain runs to 410 residues: Histone-lysine N-methyltransferase SUV39H2 (410 aa).

Residues 47-105 form the Chromo domain; that stretch reads YEVEYLCDYKVVKDMEYYLVKWKGWPDSTNTWEPLQNLKCPLLLQQFSNDKHNYLSQVK. The Pre-SET domain maps to 189 to 247; it reads FGCSCTDCFFQKCCPAEAGVLLAYNKNQQIKIPPGTPIYECNSRCQCGPDCPNRIVQKG. Zn(2+)-binding residues include cysteine 191, cysteine 193, cysteine 196, cysteine 201, cysteine 202, cysteine 229, cysteine 233, cysteine 235, and cysteine 239. Residues 250-373 form the SET domain; sequence YSLCIFRTSN…AGEELTFDYQ (124 aa). S-adenosyl-L-methionine-binding positions include 261-263 and 330-331; these read RGW and NH. Position 333 (cysteine 333) interacts with Zn(2+). Tyrosine 372 is an S-adenosyl-L-methionine binding site. Residues serine 381, serine 384, and serine 388 each carry the phosphoserine modification. In terms of domain architecture, Post-SET spans 394–410; the sequence is VRTVCKCGAVTCRGYLN. Cysteine 398 serves as a coordination point for Zn(2+). Lysine 399 is a binding site for S-adenosyl-L-methionine. The Zn(2+) site is built by cysteine 400 and cysteine 405.

This sequence belongs to the class V-like SAM-binding methyltransferase superfamily. Histone-lysine methyltransferase family. Suvar3-9 subfamily. In terms of assembly, interacts with SMAD5. The large PER complex involved in the histone methylation is composed of at least PER2, CBX3, TRIM28, SUV39H1 and/or SUV39H2; CBX3 mediates the formation of the complex. Post-translationally, ubiquitinated by the DCX(DCAF13) E3 ubiquitin ligase complex, leading to its degradation.

The protein localises to the nucleus. The protein resides in the chromosome. It localises to the centromere. It catalyses the reaction L-lysyl(9)-[histone H3] + 3 S-adenosyl-L-methionine = N(6),N(6),N(6)-trimethyl-L-lysyl(9)-[histone H3] + 3 S-adenosyl-L-homocysteine + 3 H(+). Histone methyltransferase that specifically trimethylates 'Lys-9' of histone H3 using monomethylated H3 'Lys-9' as substrate. H3 'Lys-9' trimethylation represents a specific tag for epigenetic transcriptional repression by recruiting HP1 (CBX1, CBX3 and/or CBX5) proteins to methylated histones. Mainly functions in heterochromatin regions, thereby playing a central role in the establishment of constitutive heterochromatin at pericentric and telomere regions. H3 'Lys-9' trimethylation is also required to direct DNA methylation at pericentric repeats. SUV39H1 is targeted to histone H3 via its interaction with RB1 and is involved in many processes, such as cell cycle regulation, transcriptional repression and regulation of telomere length. May participate in regulation of higher-order chromatin organization during spermatogenesis. Recruited by the large PER complex to the E-box elements of the circadian target genes such as PER2 itself or PER1, contributes to the conversion of local chromatin to a heterochromatin-like repressive state through H3 'Lys-9' trimethylation. The sequence is that of Histone-lysine N-methyltransferase SUV39H2 (SUV39H2) from Homo sapiens (Human).